Here is a 227-residue protein sequence, read N- to C-terminus: Phosphatidylserine decarboxylase proenzyme (227 aa).

Serine 184 functions as the Schiff-base intermediate with substrate; via pyruvic acid in the catalytic mechanism. Serine 184 carries the post-translational modification Pyruvic acid (Ser); by autocatalysis.

It belongs to the phosphatidylserine decarboxylase family. PSD-A subfamily. Heterodimer of a large membrane-associated beta subunit and a small pyruvoyl-containing alpha subunit. Pyruvate serves as cofactor. In terms of processing, is synthesized initially as an inactive proenzyme. Formation of the active enzyme involves a self-maturation process in which the active site pyruvoyl group is generated from an internal serine residue via an autocatalytic post-translational modification. Two non-identical subunits are generated from the proenzyme in this reaction, and the pyruvate is formed at the N-terminus of the alpha chain, which is derived from the carboxyl end of the proenzyme. The post-translation cleavage follows an unusual pathway, termed non-hydrolytic serinolysis, in which the side chain hydroxyl group of the serine supplies its oxygen atom to form the C-terminus of the beta chain, while the remainder of the serine residue undergoes an oxidative deamination to produce ammonia and the pyruvoyl prosthetic group on the alpha chain.

The protein localises to the cell membrane. It catalyses the reaction a 1,2-diacyl-sn-glycero-3-phospho-L-serine + H(+) = a 1,2-diacyl-sn-glycero-3-phosphoethanolamine + CO2. Its pathway is phospholipid metabolism; phosphatidylethanolamine biosynthesis; phosphatidylethanolamine from CDP-diacylglycerol: step 2/2. Its function is as follows. Catalyzes the formation of phosphatidylethanolamine (PtdEtn) from phosphatidylserine (PtdSer). The polypeptide is Phosphatidylserine decarboxylase proenzyme (Ehrlichia ruminantium (strain Gardel)).